The chain runs to 144 residues: MESPLGSDLARLVRIWRALIDHRLKPLELTQTHWVTLHNIHQLPPDQSQIQLAKAIGIEQPSLVRTLDQLEEKGLISRQTCASDRRAKRIKLTEKAEPLISEMEAVINKTRAEILHGISAEELEQLIKLIAKLEHNIIELQAKG.

In terms of domain architecture, HTH marR-type spans 2–135 (ESPLGSDLAR…LIKLIAKLEH (134 aa)). The H-T-H motif DNA-binding region spans 49 to 72 (QIQLAKAIGIEQPSLVRTLDQLEE).

The protein belongs to the SlyA family. As to quaternary structure, homodimer.

In terms of biological role, transcription regulator that can specifically activate or repress expression of target genes. The sequence is that of Transcriptional regulator SlyA from Escherichia coli O127:H6 (strain E2348/69 / EPEC).